The following is a 407-amino-acid chain: Schlafen-like protein 1 (407 aa).

2 disordered regions span residues 1-28 and 137-191; these read MTPM…LPEL and AQGP…CQGR. A compositionally biased stretch (low complexity) spans 155-167; sequence GLSPGPSPGSGVP. Positions 181–190 are enriched in polar residues; that stretch reads QAQQLQSCQG. 261 to 268 is a binding site for ATP; it reads GVEDSGLV. The stretch at 366–398 forms a coiled coil; that stretch reads RQRWLVELGKLEEKMKALMMEKEQLQQQLQQHG.

It belongs to the Schlafen family. Subgroup I subfamily.

The protein is Schlafen-like protein 1 (SLFNL1) of Homo sapiens (Human).